We begin with the raw amino-acid sequence, 560 residues long: Nuclear hormone receptor family member nhr-8 (560 aa).

The disordered stretch occupies residues 1-21 (MPSSSPSMDESRRSAVPPKEP). A DNA-binding region (nuclear receptor) is located at residues 23–98 (GRICTVCSDR…VGMNSEWLND (76 aa)). 2 NR C4-type zinc fingers span residues 26–46 (CTVC…CESC) and 62–86 (CPFS…LNKC). The 225-residue stretch at 336-560 (DEITLLEELH…PLIRELCSFE (225 aa)) folds into the NR LBD domain.

It belongs to the nuclear hormone receptor family.

The protein resides in the nucleus. Orphan nuclear receptor. This is Nuclear hormone receptor family member nhr-8 (nhr-8) from Caenorhabditis elegans.